Here is a 123-residue protein sequence, read N- to C-terminus: Ribosome-binding factor A (123 aa).

It belongs to the RbfA family. Monomer. Binds 30S ribosomal subunits, but not 50S ribosomal subunits or 70S ribosomes.

Its subcellular location is the cytoplasm. One of several proteins that assist in the late maturation steps of the functional core of the 30S ribosomal subunit. Associates with free 30S ribosomal subunits (but not with 30S subunits that are part of 70S ribosomes or polysomes). Required for efficient processing of 16S rRNA. May interact with the 5'-terminal helix region of 16S rRNA. The protein is Ribosome-binding factor A of Neisseria meningitidis serogroup C (strain 053442).